Consider the following 100-residue polypeptide: Urease subunit gamma (100 aa).

It belongs to the urease gamma subunit family. As to quaternary structure, heterotrimer of UreA (gamma), UreB (beta) and UreC (alpha) subunits. Three heterotrimers associate to form the active enzyme.

The protein localises to the cytoplasm. It catalyses the reaction urea + 2 H2O + H(+) = hydrogencarbonate + 2 NH4(+). The protein operates within nitrogen metabolism; urea degradation; CO(2) and NH(3) from urea (urease route): step 1/1. The sequence is that of Urease subunit gamma from Synechococcus sp. (strain WH7805).